A 189-amino-acid chain; its full sequence is MKTGKELKPGTVLRIDNDPWLVQKAEFTKSGRNSAIMKTKLKNLLTGYKTETVYGADDKLDDVILDRKEATLSFISGDSYTFMDTTDYTMYELNAEDIDAVLPYIEEGMEDICEAVFFEGRLVSVELPTTISRQVVYTENAARGDTSGKVMKPAKLKNGTEIQVADFIQIDEWIDIDTRDNSFKGRSKK.

Belongs to the elongation factor P family.

It localises to the cytoplasm. It functions in the pathway protein biosynthesis; polypeptide chain elongation. Its function is as follows. Involved in peptide bond synthesis. Stimulates efficient translation and peptide-bond synthesis on native or reconstituted 70S ribosomes in vitro. Probably functions indirectly by altering the affinity of the ribosome for aminoacyl-tRNA, thus increasing their reactivity as acceptors for peptidyl transferase. This Pseudomonas putida (strain GB-1) protein is Elongation factor P.